The sequence spans 308 residues: Alternaria stem canker resistance protein 1 (308 aa).

The next 6 membrane-spanning stretches (helical) occupy residues 21–41, 82–102, 128–148, 165–185, 213–233, and 254–274; these read YQDLIFLLFFALFFPVLRFIL, FVYFLSTELLALSVTCNEPWF, LLYMYAGGFYFYSIFATLYWE, VSLIVLSYVYGFARIGSVVLA, FSLFALVFTSLRIICYPFWII, and IILYFVFNALLICLLVLHLFW. Residues 73 to 287 form the TLC domain; it reads NKFKESAWKF…ILRMVKNQIL (215 aa).

The protein localises to the endoplasmic reticulum membrane. In terms of biological role, mediates resistance to sphinganine-analog mycotoxins (SAMs) by restoring the sphingolipid biosynthesis. Could salvage the transport of GPI-anchored proteins from the endoplasmic reticulum to the Golgi apparatus in ceramides-depleted cells after SAM exposure. This Solanum lycopersicum (Tomato) protein is Alternaria stem canker resistance protein 1.